Consider the following 230-residue polypeptide: 5'-methylthioadenosine/S-adenosylhomocysteine nucleosidase (230 aa).

Glutamate 12 serves as the catalytic Proton acceptor. Residues glycine 78, isoleucine 153, and 174-175 (ME) each bind substrate. Catalysis depends on aspartate 198, which acts as the Proton donor.

The protein belongs to the PNP/UDP phosphorylase family. MtnN subfamily.

The catalysed reaction is S-adenosyl-L-homocysteine + H2O = S-(5-deoxy-D-ribos-5-yl)-L-homocysteine + adenine. It carries out the reaction S-methyl-5'-thioadenosine + H2O = 5-(methylsulfanyl)-D-ribose + adenine. The enzyme catalyses 5'-deoxyadenosine + H2O = 5-deoxy-D-ribose + adenine. It functions in the pathway amino-acid biosynthesis; L-methionine biosynthesis via salvage pathway; S-methyl-5-thio-alpha-D-ribose 1-phosphate from S-methyl-5'-thioadenosine (hydrolase route): step 1/2. Catalyzes the irreversible cleavage of the glycosidic bond in both 5'-methylthioadenosine (MTA) and S-adenosylhomocysteine (SAH/AdoHcy) to adenine and the corresponding thioribose, 5'-methylthioribose and S-ribosylhomocysteine, respectively. Also cleaves 5'-deoxyadenosine, a toxic by-product of radical S-adenosylmethionine (SAM) enzymes, into 5-deoxyribose and adenine. The chain is 5'-methylthioadenosine/S-adenosylhomocysteine nucleosidase from Shewanella sediminis (strain HAW-EB3).